The following is a 532-amino-acid chain: Glucose-6-phosphate isomerase (532 aa).

The active-site Proton donor is Glu330. Catalysis depends on residues His359 and Lys461.

This sequence belongs to the GPI family.

Its subcellular location is the cytoplasm. The enzyme catalyses alpha-D-glucose 6-phosphate = beta-D-fructose 6-phosphate. It participates in carbohydrate biosynthesis; gluconeogenesis. The protein operates within carbohydrate degradation; glycolysis; D-glyceraldehyde 3-phosphate and glycerone phosphate from D-glucose: step 2/4. Functionally, catalyzes the reversible isomerization of glucose-6-phosphate to fructose-6-phosphate. The polypeptide is Glucose-6-phosphate isomerase (Synechococcus sp. (strain CC9605)).